A 79-amino-acid chain; its full sequence is Cytochrome c oxidase assembly factor 6 homolog (79 aa).

A CHCH domain is found at 9-52 (RQACWGARDLYWRCLDDNAEDAARCQKLRSSFEASCPQQWIKYF). The Cx9C motif signature appears at 12–22 (CWGARDLYWRC). 2 disulfide bridges follow: Cys12/Cys44 and Cys22/Cys33. A Cx10C motif motif is present at residues 33–44 (CQKLRSSFEASC).

Belongs to the cytochrome c oxidase subunit 6B family. As to quaternary structure, found in a complex with TMEM177, COX20, MT-CO2/COX2, COX18, SCO1 and SCO2. Interacts with COA1, MT-CO2/COX2, SCO1, SCO2 and COX20. Interacts with COX20 in a MT-CO2/COX2- and COX18-dependent manner. Interacts with COX16.

The protein localises to the mitochondrion. The protein resides in the mitochondrion intermembrane space. Involved in the maturation of the mitochondrial respiratory chain complex IV subunit MT-CO2/COX2. Thereby, may regulate early steps of complex IV assembly. Mitochondrial respiratory chain complex IV or cytochrome c oxidase is the component of the respiratory chain that catalyzes the transfer of electrons from intermembrane space cytochrome c to molecular oxygen in the matrix and as a consequence contributes to the proton gradient involved in mitochondrial ATP synthesis. May also be required for efficient formation of respiratory supercomplexes comprised of complexes III and IV. This Mus musculus (Mouse) protein is Cytochrome c oxidase assembly factor 6 homolog (Coa6).